A 344-amino-acid polypeptide reads, in one-letter code: Follistatin (344 aa).

The signal sequence occupies residues 1–29 (MVRPRHQPGGLCLLLLLLCQFMEDRSAQA). The region spanning 30–103 (GNCWLRQAKN…TCDNVDCGPG (74 aa)) is the TB domain. Disulfide bonds link C32–C55, C42–C88, C56–C91, C95–C106, C100–C116, C118–C150, C122–C143, C132–C164, C168–C179, C173–C189, C192–C225, C196–C218, C207–C239, C245–C256, C250–C267, C270–C302, C274–C295, and C284–C316. The Follistatin-like 1 domain maps to 94–117 (TCDNVDCGPGKKCRMNKKNKPRCV). The 55-residue stretch at 112–166 (NKPRCVCAPDCSNITWKGPVCGLDGKTYRNECALLKARCKEQPELEVQYQGKCKK) folds into the Kazal-like 1 domain. N124 carries N-linked (GlcNAc...) asparagine glycosylation. Residues 167-190 (TCRDVNCPGSSTCVVDQTNNAYCV) enclose the Follistatin-like 2 domain. The Kazal-like 2 domain maps to 186-241 (NAYCVTCNRICPEPTSSEQYLCGNDGVTYSSACHLRKATCLLGRSIGLAYEGKCIK). In terms of domain architecture, Follistatin-like 3 spans 244 to 268 (SCEDIQCTGGKKCLWDFKVGRGRCS). The Kazal-like 3 domain occupies 264 to 318 (RGRCSLCDELCPDSKSEEPVCASDNATYASECAMKEAACSSGVLLEVKHSGSCNS). N-linked (GlcNAc...) asparagine glycosylation occurs at N288. Positions 314 to 344 (GSCNSISEDTEEEEEDEDQDYSFPISSILEW) are disordered. Acidic residues predominate over residues 321–333 (EDTEEEEEDEDQD).

In terms of assembly, interacts with GDF11. Interacts with activin A/INHBA. Interacts with myostatin/MSTN.

It localises to the secreted. It is found in the nucleus. The protein localises to the nucleolus. In terms of biological role, multifunctional regulatory protein whose primary function is to antagonize members of the transforming growth factor beta (TGF-beta) superfamily including activin, myostatin, GDF11 or bone morphogenetic proteins (BMPs). Mechanistically, binds to these ligands in the extracellular space, blocking their type II receptor-binding site to inhibit downstream signaling. Plays an essential role in muscle fiber formation and growth both by preventing the repressive effects of myostatin and through SMAD3/AKT/mTOR signaling independently of myostatin. Also promotes neural differentiation by antagonizing the action BMP4. Acts as a specific inhibitor of the biosynthesis and secretion of pituitary follicle stimulating hormone (FSH) by sequestering activin A/INHBA. On the other hand, translocates into the nucleus where it down-regulates rRNA synthesis and ribosome biogenesis to maintain cellular energy homeostasis by binding to rDNA. The polypeptide is Follistatin (Equus caballus (Horse)).